The chain runs to 633 residues: Extracellular metalloproteinase 3 (633 aa).

The N-terminal stretch at 1-18 (MHGLLLAGLLALPMNVLA) is a signal peptide. Residues 19–246 (HPAEQHASNV…VHNVVDYVAS (228 aa)) constitute a propeptide that is removed on maturation. An N-linked (GlcNAc...) asparagine glycan is attached at N410. H429 contributes to the Zn(2+) binding site. The active site involves E430. Residue H433 participates in Zn(2+) binding. N480 and N622 each carry an N-linked (GlcNAc...) asparagine glycan.

Belongs to the peptidase M36 family. It depends on Zn(2+) as a cofactor.

The protein localises to the secreted. In terms of biological role, secreted metalloproteinase probably acting as a virulence factor. The sequence is that of Extracellular metalloproteinase 3 (MEP3) from Trichophyton tonsurans (Scalp ringworm fungus).